Reading from the N-terminus, the 348-residue chain is D-lactate dehydrogenase kk1H (348 aa).

NAD(+) contacts are provided by residues 158–159 (RI), Asp-178, 208–209 (CP), 235–237 (TSR), and Asp-261. Arg-237 is a catalytic residue. Glu-266 is an active-site residue. His-298 (proton donor) is an active-site residue.

It belongs to the D-isomer specific 2-hydroxyacid dehydrogenase family.

Its pathway is secondary metabolite biosynthesis. D-lactate dehydrogenase; part of the gene cluster that mediates the biosynthesis of KK-1, a novel cyclic depsipeptide with 10 residues which is a promising active compound with high activity against many plant pathogens, especially Botrytis cinerea. Within the pathway, kk1H catalyzes in the synthesis of D-lactic acid from pyruvic acid, which is recognized by the A domain of the first kk1B module. The nonribosomal peptide synthetase (NRPS) kk1B catalyzes the elongation and cyclization of the decapeptide chain composed of 1 D-lactic acid residue (D-Lac), 1 pipecolic acid residue (Pip), 1 aspartic acid residue (Asp), 1 isoleucine residue (Ile), 1 glycine residue (Gly), 1 tyrosine residue (Tyr) and 4 valine residues (Val). The Asp, Ile and 3 Val residues are N-methylated by the 5 methyltransferase domains from the NRPS (found in modules 3, 5, 6, 7 and 9), whereas the Tyr residue is O-methylated by the cluster encoded O-methyltransferase kk1A. The thioesterase kk1J is likely to be involved in the corrective mechanism of peptide chain synthesis. The D-lactate dehydrogenase kk1H is involved in the synthesis of D-lactic acid from pyruvic acid, which is recognized by the A domain of the first kk1B module. The pyrroline-5-carboxylate reductase kk1I is involved in the synthesis of the L-pipecolic acid residue of KK-1 from delta-1-pyrroline-5-carboxylate (P5C), a metabolic intermediate of lysine. It still is unclear how kk1C and kk1D are involved in the production of KK-1. This chain is D-lactate dehydrogenase kk1H, found in Curvularia clavata.